A 208-amino-acid chain; its full sequence is Small ribosomal subunit protein uS4 (208 aa).

An S4 RNA-binding domain is found at C98 to A160.

The protein belongs to the universal ribosomal protein uS4 family. In terms of assembly, part of the 30S ribosomal subunit. Contacts protein S5. The interaction surface between S4 and S5 is involved in control of translational fidelity.

Its function is as follows. One of the primary rRNA binding proteins, it binds directly to 16S rRNA where it nucleates assembly of the body of the 30S subunit. In terms of biological role, with S5 and S12 plays an important role in translational accuracy. The sequence is that of Small ribosomal subunit protein uS4 from Ruthia magnifica subsp. Calyptogena magnifica.